A 188-amino-acid chain; its full sequence is ATP-dependent protease subunit HslV (188 aa).

Thr-8 is an active-site residue. The Na(+) site is built by Ala-165, Cys-168, and Thr-171.

It belongs to the peptidase T1B family. HslV subfamily. As to quaternary structure, a double ring-shaped homohexamer of HslV is capped on each side by a ring-shaped HslU homohexamer. The assembly of the HslU/HslV complex is dependent on binding of ATP.

The protein resides in the cytoplasm. It carries out the reaction ATP-dependent cleavage of peptide bonds with broad specificity.. With respect to regulation, allosterically activated by HslU binding. Functionally, protease subunit of a proteasome-like degradation complex believed to be a general protein degrading machinery. This is ATP-dependent protease subunit HslV from Neorickettsia sennetsu (strain ATCC VR-367 / Miyayama) (Ehrlichia sennetsu).